The following is a 522-amino-acid chain: Sorting nexin-1 (522 aa).

Positions 1-142 (MASGGGGCSA…ELEEEEQEDQ (142 aa)) are disordered. Residues Ser-32 and Ser-39 each carry the phosphoserine modification. Residues 35–45 (EAGDSDTEGED) are compositionally biased toward acidic residues. 2 positions are modified to phosphothreonine: Thr-41 and Thr-48. Residues 55 to 65 (KPQSPKKTTSL) show a composition bias toward polar residues. A phosphoserine mark is found at Ser-58 and Ser-72. Over residues 71-80 (GSKENGIHEE) the composition is skewed to basic and acidic residues. Positions 98 to 107 (LDSTQNNQKT) are enriched in polar residues. Over residues 132–142 (EELEEEEQEDQ) the composition is skewed to acidic residues. Residues 143–272 (FDLTVGITDP…EFLEKEELPR (130 aa)) form the PX domain. Arg-186, Ser-188, and Lys-214 together coordinate a 1,2-diacyl-sn-glycero-3-phospho-(1D-myo-inositol-3-phosphate). Position 188 is a phosphoserine (Ser-188). At Lys-237 the chain carries N6-acetyllysine. Residue Arg-238 coordinates a 1,2-diacyl-sn-glycero-3-phospho-(1D-myo-inositol-3-phosphate). At Ser-280 the chain carries Phosphoserine. The tract at residues 281-298 (GAGLLKMFNKATDAVSKM) is membrane-binding amphipathic helix. The region spanning 302 to 522 (MNESDIWFEE…AFLPEARAIS (221 aa)) is the BAR domain.

It belongs to the sorting nexin family. In terms of assembly, predominantly forms heterodimers with BAR domain-containing sorting nexins SNX5, SNX6 and SNX32; can self-associate to form homodimers. The heterodimers are proposed to self-assemble into helical arrays on the membrane to stabilize and expand local membrane curvature underlying endosomal tubule formation. Thought to be a component of the originally described retromer complex (also called SNX-BAR retromer) which is a pentamer containing the heterotrimeric retromer cargo-selective complex (CSC), also described as vacuolar protein sorting subcomplex (VPS) and a heterodimeric membrane-deforming subcomplex formed between SNX1 or SNX2 and SNX5 or SNX6 (also called SNX-BAR subcomplex); the respective CSC and SNX-BAR subcomplexes associate with low affinity. Interacts with SNX5, SNX6, SNX32, VPS26A, VPS29, VPS35, DRD5, DENND5A, KALRN, RHOG (GDP-bound form). The interaction with SNX2 is reported controversially. Interacts with DNAJC13; prevented by presence of HGS. Interacts with HGS.

The protein localises to the endosome membrane. The protein resides in the golgi apparatus. Its subcellular location is the trans-Golgi network membrane. It localises to the early endosome membrane. It is found in the cell projection. The protein localises to the lamellipodium. Involved in several stages of intracellular trafficking. Interacts with membranes containing phosphatidylinositol 3-phosphate (PtdIns(3P)) or phosphatidylinositol 3,5-bisphosphate (PtdIns(3,5)P2). Acts in part as component of the retromer membrane-deforming SNX-BAR subcomplex. The SNX-BAR retromer mediates retrograde transport of cargo proteins from endosomes to the trans-Golgi network (TGN) and is involved in endosome-to-plasma membrane transport for cargo protein recycling. The SNX-BAR subcomplex functions to deform the donor membrane into a tubular profile called endosome-to-TGN transport carrier (ETC). Can sense membrane curvature and has in vitro vesicle-to-membrane remodeling activity. Involved in retrograde endosome-to-TGN transport of lysosomal enzyme receptors (IGF2R, M6PR and SORT1). Plays a role in targeting ligand-activated EGFR to the lysosomes for degradation after endocytosis from the cell surface and release from the Golgi. Involvement in retromer-independent endocytic trafficking of P2RY1 and lysosomal degradation of protease-activated receptor-1/F2R. Promotes KALRN- and RHOG-dependent but retromer-independent membrane remodeling such as lamellipodium formation; the function is dependent on GEF activity of KALRN. Required for endocytosis of DRD5 upon agonist stimulation but not for basal receptor trafficking. This chain is Sorting nexin-1 (Snx1), found in Rattus norvegicus (Rat).